Here is a 127-residue protein sequence, read N- to C-terminus: Large ribosomal subunit protein uL22 (127 aa).

This sequence belongs to the universal ribosomal protein uL22 family. As to quaternary structure, part of the 50S ribosomal subunit.

Its function is as follows. This protein binds specifically to 23S rRNA; its binding is stimulated by other ribosomal proteins, e.g. L4, L17, and L20. It is important during the early stages of 50S assembly. It makes multiple contacts with different domains of the 23S rRNA in the assembled 50S subunit and ribosome. Functionally, the globular domain of the protein is located near the polypeptide exit tunnel on the outside of the subunit, while an extended beta-hairpin is found that lines the wall of the exit tunnel in the center of the 70S ribosome. The chain is Large ribosomal subunit protein uL22 from Rhizorhabdus wittichii (strain DSM 6014 / CCUG 31198 / JCM 15750 / NBRC 105917 / EY 4224 / RW1) (Sphingomonas wittichii).